The primary structure comprises 342 residues: Holliday junction branch migration complex subunit RuvB (342 aa).

Residues 1–185 form a large ATPase domain (RuvB-L) region; that stretch reads MTVKPLRDVT…FPIQERLEYY (185 aa). Residues L24, R25, G66, K69, T70, S71, 132-134, R175, Y185, and R222 each bind ATP; that span reads EDY. Mg(2+) is bound at residue T70. A small ATPAse domain (RuvB-S) region spans residues 186-256; that stretch reads GPAELKEIAV…VVDRTLRRLE (71 aa). Residues 259–342 are head domain (RuvB-H); that stretch reads ARGLDAMDRR…RPGGKQGSLV (84 aa). DNA is bound by residues R314 and R319.

It belongs to the RuvB family. Homohexamer. Forms an RuvA(8)-RuvB(12)-Holliday junction (HJ) complex. HJ DNA is sandwiched between 2 RuvA tetramers; dsDNA enters through RuvA and exits via RuvB. An RuvB hexamer assembles on each DNA strand where it exits the tetramer. Each RuvB hexamer is contacted by two RuvA subunits (via domain III) on 2 adjacent RuvB subunits; this complex drives branch migration. In the full resolvosome a probable DNA-RuvA(4)-RuvB(12)-RuvC(2) complex forms which resolves the HJ.

The protein resides in the cytoplasm. It catalyses the reaction ATP + H2O = ADP + phosphate + H(+). Functionally, the RuvA-RuvB-RuvC complex processes Holliday junction (HJ) DNA during genetic recombination and DNA repair, while the RuvA-RuvB complex plays an important role in the rescue of blocked DNA replication forks via replication fork reversal (RFR). RuvA specifically binds to HJ cruciform DNA, conferring on it an open structure. The RuvB hexamer acts as an ATP-dependent pump, pulling dsDNA into and through the RuvAB complex. RuvB forms 2 homohexamers on either side of HJ DNA bound by 1 or 2 RuvA tetramers; 4 subunits per hexamer contact DNA at a time. Coordinated motions by a converter formed by DNA-disengaged RuvB subunits stimulates ATP hydrolysis and nucleotide exchange. Immobilization of the converter enables RuvB to convert the ATP-contained energy into a lever motion, pulling 2 nucleotides of DNA out of the RuvA tetramer per ATP hydrolyzed, thus driving DNA branch migration. The RuvB motors rotate together with the DNA substrate, which together with the progressing nucleotide cycle form the mechanistic basis for DNA recombination by continuous HJ branch migration. Branch migration allows RuvC to scan DNA until it finds its consensus sequence, where it cleaves and resolves cruciform DNA. This is Holliday junction branch migration complex subunit RuvB from Anaeromyxobacter sp. (strain K).